We begin with the raw amino-acid sequence, 368 residues long: Probable acetylxylan esterase A (368 aa).

An N-terminal signal peptide occupies residues 1-19 (MRALSVFFALFCFLALSSA). A propeptide spanning residues 20-28 (SPGQDVVKR) is cleaved from the precursor. A catalytic region spans residues 32–304 (GSLQQVTNFG…GEQDMEWFGF (273 aa)). The Charge relay system role is filled by S149. N-linked (GlcNAc...) asparagine glycosylation occurs at N191. The segment at 305–333 (AGGSSTTTTQPTTTSTTTSSGGSSTGTGV) is ser/Thr-rich linker. Residues 306 to 330 (GGSSTTTTQPTTTSTTTSSGGSSTG) form a disordered region. Residues 307–330 (GSSTTTTQPTTTSTTTSSGGSSTG) are compositionally biased toward low complexity. The region spanning 332-368 (GVAAHWGQCGGNGWTGPTVCASGYTCTVVNAWYSQCL) is the CBM1 domain.

The protein belongs to the carbohydrate esterase 1 (CE1) family. AxeA subfamily. Monomer.

The protein resides in the secreted. The catalysed reaction is Deacetylation of xylans and xylo-oligosaccharides.. The protein operates within glycan degradation; xylan degradation. Acetylxylan esterase involved in the hydrolysis of xylan, a major structural heterogeneous polysaccharide found in plant biomass representing the second most abundant polysaccharide in the biosphere, after cellulose. Degrades acetylated xylans by cleaving acetyl side groups from the hetero-xylan backbone. The chain is Probable acetylxylan esterase A (axeA) from Neosartorya fischeri (strain ATCC 1020 / DSM 3700 / CBS 544.65 / FGSC A1164 / JCM 1740 / NRRL 181 / WB 181) (Aspergillus fischerianus).